The following is a 393-amino-acid chain: (S)-mandelate dehydrogenase (393 aa).

In terms of domain architecture, FMN hydroxy acid dehydrogenase spans 1–377 (MSQNLFNVED…SPDYLQNEGV (377 aa)). Tyr-26 provides a ligand contact to (S)-mandelate. Residues 79-81 (PTG), Ser-108, and Gln-129 each bind FMN. Tyr-131 provides a ligand contact to (S)-mandelate. Residue Thr-156 participates in FMN binding. Arg-165 provides a ligand contact to (S)-mandelate. Lys-250 provides a ligand contact to FMN. Positions 274 and 277 each coordinate (S)-mandelate. The active-site Proton acceptor is the His-274. FMN contacts are provided by residues 303–307 (DSGFR) and 326–327 (GR).

Belongs to the FMN-dependent alpha-hydroxy acid dehydrogenase family. As to quaternary structure, homotetramer. It depends on FMN as a cofactor.

The protein localises to the cell inner membrane. The enzyme catalyses (S)-mandelate + A = phenylglyoxylate + AH2. It participates in aromatic compound metabolism; (R)-mandelate degradation; benzoate from (R)-mandelate: step 2/4. In terms of biological role, catalyzes the dehydrogenation of (S)-mandelate to phenylglyoxylate (benzoylformate). Is likely involved in the utilization of mandelate as a sole source of carbon and energy for growth. Active in vitro with the artificial electron acceptors 2,6-dichlorophenolindophenol (DCPIP) or ferricyanide, but in vivo most likely transfer the electron pair from the reduced flavin to a component of the electron transport chain in the membrane, possibly a quinone. Shows very low activity with oxygen as the electron acceptor, and also with 3-indolelactate and medium chain 2-hydroxyacids as substrates. This Pseudomonas putida (Arthrobacter siderocapsulatus) protein is (S)-mandelate dehydrogenase.